The following is a 153-amino-acid chain: Ribosomal RNA large subunit methyltransferase H (153 aa).

Positions 71 and 102 each coordinate S-adenosyl-L-methionine.

The protein belongs to the RNA methyltransferase RlmH family. In terms of assembly, homodimer.

It is found in the cytoplasm. The enzyme catalyses pseudouridine(1915) in 23S rRNA + S-adenosyl-L-methionine = N(3)-methylpseudouridine(1915) in 23S rRNA + S-adenosyl-L-homocysteine + H(+). Its function is as follows. Specifically methylates the pseudouridine at position 1915 (m3Psi1915) in 23S rRNA. This is Ribosomal RNA large subunit methyltransferase H from Anaeromyxobacter dehalogenans (strain 2CP-1 / ATCC BAA-258).